The following is an 85-amino-acid chain: UPF0181 protein YPO1774/y2534/YP_1619 (85 aa).

Residues 50-85 (QAMAIFEDHDFDEHTESDYRRDDEPDADDIEDPYEG) form a disordered region. The span at 55 to 72 (FEDHDFDEHTESDYRRDD) shows a compositional bias: basic and acidic residues. A compositionally biased stretch (acidic residues) spans 73 to 85 (EPDADDIEDPYEG).

This sequence belongs to the UPF0181 family.

The chain is UPF0181 protein YPO1774/y2534/YP_1619 from Yersinia pestis.